The following is a 335-amino-acid chain: tRNA pseudouridine synthase D (335 aa).

D77 serves as the catalytic Nucleophile. Positions 152–308 (GFPNYFTEQR…AQHLSWSFIP (157 aa)) constitute a TRUD domain.

Belongs to the pseudouridine synthase TruD family.

The enzyme catalyses uridine(13) in tRNA = pseudouridine(13) in tRNA. Responsible for synthesis of pseudouridine from uracil-13 in transfer RNAs. The protein is tRNA pseudouridine synthase D of Histophilus somni (strain 129Pt) (Haemophilus somnus).